A 278-amino-acid polypeptide reads, in one-letter code: 3-methyl-2-oxobutanoate hydroxymethyltransferase (278 aa).

Positions 43 and 82 each coordinate Mg(2+). 3-methyl-2-oxobutanoate is bound by residues 43–44 (DS), D82, and K112. A Mg(2+)-binding site is contributed by E114. The active-site Proton acceptor is the E181.

Belongs to the PanB family. As to quaternary structure, homodecamer; pentamer of dimers. It depends on Mg(2+) as a cofactor.

Its subcellular location is the cytoplasm. It catalyses the reaction 3-methyl-2-oxobutanoate + (6R)-5,10-methylene-5,6,7,8-tetrahydrofolate + H2O = 2-dehydropantoate + (6S)-5,6,7,8-tetrahydrofolate. Its pathway is cofactor biosynthesis; (R)-pantothenate biosynthesis; (R)-pantoate from 3-methyl-2-oxobutanoate: step 1/2. In terms of biological role, catalyzes the reversible reaction in which hydroxymethyl group from 5,10-methylenetetrahydrofolate is transferred onto alpha-ketoisovalerate to form ketopantoate. The sequence is that of 3-methyl-2-oxobutanoate hydroxymethyltransferase from Bacillus cereus (strain G9842).